The chain runs to 153 residues: Hemoglobin-3 (153 aa).

N-acetylserine is present on S2. Residues 4 to 150 (GLTGPQKAAL…ICRVQGDFMK (147 aa)) enclose the Globin domain. Position 99 (H99) interacts with heme b.

The protein belongs to the globin family. As to quaternary structure, homotetramer.

The protein resides in the cytoplasm. The sequence is that of Hemoglobin-3 from Phacoides pectinatus (Thick lucine).